Here is a 200-residue protein sequence, read N- to C-terminus: Small ribosomal subunit protein uS4 (200 aa).

Positions glycine 21 to arginine 42 are disordered. The region spanning serine 92–isoleucine 155 is the S4 RNA-binding domain.

This sequence belongs to the universal ribosomal protein uS4 family. Part of the 30S ribosomal subunit. Contacts protein S5. The interaction surface between S4 and S5 is involved in control of translational fidelity.

Functionally, one of the primary rRNA binding proteins, it binds directly to 16S rRNA where it nucleates assembly of the body of the 30S subunit. In terms of biological role, with S5 and S12 plays an important role in translational accuracy. The chain is Small ribosomal subunit protein uS4 from Geobacillus thermodenitrificans (strain NG80-2).